Here is a 264-residue protein sequence, read N- to C-terminus: tRNA (guanine-N(1)-)-methyltransferase (264 aa).

Residues Gly125 and 145–150 (LGDFVL) contribute to the S-adenosyl-L-methionine site.

It belongs to the RNA methyltransferase TrmD family. Homodimer.

The protein resides in the cytoplasm. The enzyme catalyses guanosine(37) in tRNA + S-adenosyl-L-methionine = N(1)-methylguanosine(37) in tRNA + S-adenosyl-L-homocysteine + H(+). Specifically methylates guanosine-37 in various tRNAs. The sequence is that of tRNA (guanine-N(1)-)-methyltransferase from Burkholderia lata (strain ATCC 17760 / DSM 23089 / LMG 22485 / NCIMB 9086 / R18194 / 383).